The primary structure comprises 389 residues: Probable family 17 glucosidase SCW10 (389 aa).

The signal sequence occupies residues 1–18 (MRFSNFLTVSALLTGALG). The propeptide occupies 19–29 (APAVRHKHEKR). Residues 70 to 134 (ASQATTSTLE…SSASSSISAS (65 aa)) are disordered. N-linked (GlcNAc...) asparagine glycosylation is present at Asn-279. Glu-326 (nucleophile) is an active-site residue.

Belongs to the glycosyl hydrolase 17 family. In terms of processing, glycosylated.

It localises to the secreted. The protein resides in the cell wall. Glucanases possibly play a role in cell expansion during growth, in cell-cell fusion during mating, and in spore release during sporulation. The sequence is that of Probable family 17 glucosidase SCW10 (SCW10) from Saccharomyces cerevisiae (strain ATCC 204508 / S288c) (Baker's yeast).